The sequence spans 378 residues: Erythronate-4-phosphate dehydrogenase (378 aa).

Positions 45 and 66 each coordinate substrate. NAD(+) contacts are provided by D146 and T175. The active site involves R208. An NAD(+)-binding site is contributed by D232. Residue E237 is part of the active site. Catalysis depends on H254, which acts as the Proton donor. NAD(+) is bound at residue G257. Residue Y258 participates in substrate binding.

It belongs to the D-isomer specific 2-hydroxyacid dehydrogenase family. PdxB subfamily. In terms of assembly, homodimer.

The protein localises to the cytoplasm. It carries out the reaction 4-phospho-D-erythronate + NAD(+) = (R)-3-hydroxy-2-oxo-4-phosphooxybutanoate + NADH + H(+). It functions in the pathway cofactor biosynthesis; pyridoxine 5'-phosphate biosynthesis; pyridoxine 5'-phosphate from D-erythrose 4-phosphate: step 2/5. In terms of biological role, catalyzes the oxidation of erythronate-4-phosphate to 3-hydroxy-2-oxo-4-phosphonooxybutanoate. This Escherichia coli O8 (strain IAI1) protein is Erythronate-4-phosphate dehydrogenase.